A 449-amino-acid polypeptide reads, in one-letter code: Trigger factor (449 aa).

The 86-residue stretch at G162 to P247 folds into the PPIase FKBP-type domain. Residues A427 to K438 are compositionally biased toward basic residues. Positions A427–K449 are disordered. Over residues S439–K449 the composition is skewed to basic and acidic residues.

This sequence belongs to the FKBP-type PPIase family. Tig subfamily.

It is found in the cytoplasm. It catalyses the reaction [protein]-peptidylproline (omega=180) = [protein]-peptidylproline (omega=0). Involved in protein export. Acts as a chaperone by maintaining the newly synthesized protein in an open conformation. Functions as a peptidyl-prolyl cis-trans isomerase. In Lactobacillus gasseri (strain ATCC 33323 / DSM 20243 / BCRC 14619 / CIP 102991 / JCM 1131 / KCTC 3163 / NCIMB 11718 / NCTC 13722 / AM63), this protein is Trigger factor.